We begin with the raw amino-acid sequence, 213 residues long: Ras-related protein Rab-25 (213 aa).

GTP contacts are provided by Ser-21, Gly-24, Lys-25, Thr-26, Asn-27, Ser-38, His-39, Thr-43, and Thr-44. Position 26 (Thr-26) interacts with Mg(2+). Short sequence motifs (switch) lie at residues 35–49 (NEFS…GVEF) and 67–84 (DTAG…YYRG). Thr-44 and Asp-67 together coordinate Mg(2+). 6 residues coordinate GTP: Gly-70, Asn-125, Lys-126, Asp-128, Ala-156, and Leu-157. Residues Cys-209 and Cys-210 are each lipidated (S-geranylgeranyl cysteine). Cys-210 carries the post-translational modification Cysteine methyl ester. Residues 211 to 213 (ISL) constitute a propeptide, removed in mature form.

It belongs to the small GTPase superfamily. Rab family. Interacts (GTP-bound form) with RAB11FIP1, RAB11FIP2, RAB11FIP3 and RAB11FIP4. Interacts (via the hypervariable C-terminal region) with ITGB1 (via the cytoplasmic region); the interaction is GTP-dependent. Interacts with ITGAV. Associates with the integrin alpha-V/beta-1 heterodimer. Interacts with VPS33B. Mg(2+) is required as a cofactor.

The protein resides in the cell membrane. Its subcellular location is the cell projection. The protein localises to the pseudopodium membrane. It is found in the cytoplasmic vesicle. It catalyses the reaction GTP + H2O = GDP + phosphate + H(+). Its activity is regulated as follows. Regulated by guanine nucleotide exchange factors (GEFs) which promote the exchange of bound GDP for free GTP. Regulated by GTPase activating proteins (GAPs) which increase the GTP hydrolysis activity. Inhibited by GDP dissociation inhibitors (GDIs) which prevent Rab-GDP dissociation. Its function is as follows. The small GTPases Rab are key regulators of intracellular membrane trafficking, from the formation of transport vesicles to their fusion with membranes. Rabs cycle between an inactive GDP-bound form and an active GTP-bound form that is able to recruit to membranes different set of downstream effectors directly responsible for vesicle formation, movement, tethering and fusion. RAB25 regulates epithelial cell differentiation, proliferation and survival, thereby playing key roles in tumorigenesis. Promotes invasive migration of cells in which it functions to localize and maintain integrin alpha-V/beta-1 at the tips of extending pseudopodia. Involved in the regulation of epithelial morphogenesis through the control of CLDN4 expression and localization at tight junctions. May selectively regulate the apical recycling pathway. Together with MYO5B regulates transcytosis. This Mus musculus (Mouse) protein is Ras-related protein Rab-25.